The following is a 130-amino-acid chain: MFDIGFTELTLIFIIGLVVLGPERLPTVARTLGHWIGRARSTLNHLKSELERETITQDMQERMEKQMRQMGLDEDSIREAKDSLLSPEQIARSRTPRDKPLSAALNNDESPSDKDSADKNNHDQDSRRHD.

The helical transmembrane segment at 1 to 21 (MFDIGFTELTLIFIIGLVVLG) threads the bilayer. Composition is skewed to basic and acidic residues over residues 57–67 (QDMQERMEKQM) and 111–130 (PSDK…RRHD). Residues 57–130 (QDMQERMEKQ…NHDQDSRRHD (74 aa)) are disordered.

The protein belongs to the TatB family. As to quaternary structure, the Tat system comprises two distinct complexes: a TatABC complex, containing multiple copies of TatA, TatB and TatC subunits, and a separate TatA complex, containing only TatA subunits. Substrates initially bind to the TatABC complex, which probably triggers association of the separate TatA complex to form the active translocon.

The protein localises to the cell inner membrane. In terms of biological role, part of the twin-arginine translocation (Tat) system that transports large folded proteins containing a characteristic twin-arginine motif in their signal peptide across membranes. Together with TatC, TatB is part of a receptor directly interacting with Tat signal peptides. TatB may form an oligomeric binding site that transiently accommodates folded Tat precursor proteins before their translocation. This Alcanivorax borkumensis (strain ATCC 700651 / DSM 11573 / NCIMB 13689 / SK2) protein is Sec-independent protein translocase protein TatB.